The sequence spans 616 residues: Zinc metalloproteinase-disintegrin-like protein H3 (616 aa).

A signal peptide spans 1–20 (MIQVLLVIICLAVFPYQGSS). Residues 21-193 (IILESGNVND…KKASQLNLTP (173 aa)) constitute a propeptide that is removed on maturation. E194 bears the Pyrrolidone carboxylic acid (Glu) mark. The region spanning 203 to 399 (KYIKLVIVAD…KMPQCILNKP (197 aa)) is the Peptidase M12B domain. 3 disulfide bridges follow: C314-C394, C354-C378, and C356-C361. A Zn(2+)-binding site is contributed by H339. The short motif at 339 to 350 (HEMGHNLGMDHD) is the Metal-binding element. The Proton acceptor role is filled by E340. Positions 343 and 349 each coordinate Zn(2+). Residue N377 is glycosylated (N-linked (GlcNAc...) asparagine). The Disintegrin domain maps to 407-493 (PAVCGNYLVE…ECPTDQFQRN (87 aa)). Ca(2+) contacts are provided by V409, N412, E416, E419, and D422. Disulfide bonds link C410–C439, C421–C434, C423–C429, C433–C456, C447–C453, C452–C478, C465–C485, C472–C504, C497–C509, C516–C566, C531–C577, C544–C554, C561–C603, and C597–C609. The short motif at 471–473 (ECD) is the D/ECD-tripeptide element. Ca(2+) contacts are provided by D473, D476, and D488. N-linked (GlcNAc...) asparagine glycosylation is present at N506.

This sequence belongs to the venom metalloproteinase (M12B) family. P-III subfamily. P-IIIc sub-subfamily. Homodimer; disulfide-linked. Zn(2+) serves as cofactor. In terms of processing, N-glycosylated. Post-translationally, the N-terminus is blocked. Expressed by the venom gland (at protein level). Expressed by the venom gland.

It localises to the secreted. The proteolytic activity requires Zn(2+) and Ca(2+) ions. The alpha-fibrinogenase activity is completely inhibited by EDTA, but not by PMSF. Functionally, zinc metalloprotease that has fibrinogenolytic and hemorrhagic activities. Cleaves insulin B chain readily at '38-Ala-|-Leu-39' bond, and at a significantly slower rate, at '40-Tyr-|-Leu-41' bond. Hydrolyzes isolated extracellular matrix (ECM) bovine fibronectin, and basal membrane (BM) proteins human collagen IV and, to a lesser extent, murine laminin, in vitro. Cleaves murine nidogen (at '350-Ser-|-Phe-351' and '380-Tyr-|-Asn-381' bonds), but not laminin, in a solubilized BM preparation. Hydrolyzes plasma proteins involved in blood coagulation in vitro. It significantly prolongs thrombin time. Has potent alpha-fibrinogenase activity cleaving human fibrinogen alpha chain at '432-Lys-|-Leu-433' bond, but does not cleave beta or gamma chains. Hydrolyzes bovine prothrombin, but does not cleave it at '366-Arg-|-Ile-367' bond, which is necessary for the formation of active alpha-thrombin, however, the cleavage of fragment 1 from it leads to reduced alpha-thrombin formation. Hydrolyzes bovine factor X heavy chain at '211-Ser-|-Leu-212', '213-Asp-|-Leu-214' and '216-Gly-|-Leu-217' bonds activating it only marginally as does not cleave at the physiological activation site. Does not cleave factor X light chain. No hydrolysis or activation of plasminogen. The alpha-fibrinogenase activity likely contributes to its hemorrhagic activity, which in rat can be completely neutralized in vivo by anti-ammodytagin antibodies, which strongly cross-react with this protein. Has very weak collagen-, ADP- and ristocetin-induced platelet aggregation inhibition activity in vitro. The protein is Zinc metalloproteinase-disintegrin-like protein H3 of Vipera ammodytes ammodytes (Western sand viper).